Consider the following 210-residue polypeptide: MTTTQTAKASRRARIERRTRESDIVIELDLDGTGQVAVDTGVPFYDHMLTALGSHASFDLTVRATGDVEIEAHHTIEDTAIALGTALGQALGDKRGIRRFGDAFIPMDETLAHAAVDLSGRPYCVHTGEPDHLQHTTIAGSSVPYHTVINRHVFESLAANARIALHVRVLYGRDPHHITEAQYKAVARALRQAVEPDPRVSGVPSTKGAL.

It belongs to the imidazoleglycerol-phosphate dehydratase family.

The protein resides in the cytoplasm. The enzyme catalyses D-erythro-1-(imidazol-4-yl)glycerol 3-phosphate = 3-(imidazol-4-yl)-2-oxopropyl phosphate + H2O. Its pathway is amino-acid biosynthesis; L-histidine biosynthesis; L-histidine from 5-phospho-alpha-D-ribose 1-diphosphate: step 6/9. The sequence is that of Imidazoleglycerol-phosphate dehydratase from Mycobacterium bovis (strain ATCC BAA-935 / AF2122/97).